A 201-amino-acid polypeptide reads, in one-letter code: Imidazoleglycerol-phosphate dehydratase (201 aa).

Belongs to the imidazoleglycerol-phosphate dehydratase family.

Its subcellular location is the cytoplasm. The enzyme catalyses D-erythro-1-(imidazol-4-yl)glycerol 3-phosphate = 3-(imidazol-4-yl)-2-oxopropyl phosphate + H2O. The protein operates within amino-acid biosynthesis; L-histidine biosynthesis; L-histidine from 5-phospho-alpha-D-ribose 1-diphosphate: step 6/9. In Prochlorococcus marinus (strain MIT 9515), this protein is Imidazoleglycerol-phosphate dehydratase.